A 748-amino-acid chain; its full sequence is Antigen peptide transporter 1 (748 aa).

Over 1-15 the chain is Cytoplasmic; the sequence is MASSRCPAPRGCRCL. The helical transmembrane segment at 16–36 threads the bilayer; it reads PGASLAWLGTVLLLLADWVLL. Residues 37–53 lie on the Lumenal side of the membrane; that stretch reads RTALPRIFSLLVPTALP. The helical transmembrane segment at 54 to 76 threads the bilayer; sequence LLRVWAVGLSRWAVLWLGACGVL. At 77-92 the chain is on the cytoplasmic side; the sequence is RATVGSKSENAGAQGW. The helical transmembrane segment at 93–113 threads the bilayer; the sequence is LAALKPLAAALGLALPGLALF. The Lumenal segment spans residues 114–133; sequence RELISWGAPGSADSTRLLHW. A helical membrane pass occupies residues 134–154; the sequence is GSHPTAFVVSYAAALPAAALW. The Cytoplasmic portion of the chain corresponds to 155–186; the sequence is HKLGSLWVPGGQGGSGNPVRRLLGCLGSETRR. A helical transmembrane segment spans residues 187–207; the sequence is LSLFLVLVVLSSLGEMAIPFF. The ABC transmembrane type-1 domain maps to 187–470; the sequence is LSLFLVLVVL…LLSIYPRVQK (284 aa). Residues 208–227 lie on the Lumenal side of the membrane; it reads TGRLTDWILQDGSADTFTRN. The helical transmembrane segment at 228 to 248 threads the bilayer; it reads LTLMSILTIASAVLEFVGDGI. Residues 249 to 298 are Cytoplasmic-facing; sequence YNNTMGHVHSHLQGEVFGAVLRQETEFFQQNQTGNIMSRVTEDTSTLSDS. Residues 299–319 traverse the membrane as a helical segment; the sequence is LSENLSLFLWYLVRGLCLLGI. The Lumenal portion of the chain corresponds to 320–328; it reads MLWGSVSLT. A helical membrane pass occupies residues 329 to 349; it reads MVTLITLPLLFLLPKKVGKWY. Over 350–418 the chain is Cytoplasmic; sequence QLLEVQVRES…AVNSWTTSIS (69 aa). Residues 375–420 form a part of the peptide-binding site region; sequence PTVRSFANEEGEAQKFREKLQEIKTLNQKEAVAYAVNSWTTSISGM. The helical transmembrane segment at 419 to 439 threads the bilayer; it reads GMLLKVGILYIGGQLVTSGAV. Residues 440–443 lie on the Lumenal side of the membrane; it reads SSGN. Residues 444-464 form a helical membrane-spanning segment; that stretch reads LVTFVLYQMQFTQAVEVLLSI. The tract at residues 453–487 is part of the peptide-binding site; that stretch reads QFTQAVEVLLSIYPRVQKAVGSSEKIFEYLDRTPR. Residues 465–748 lie on the Cytoplasmic side of the membrane; sequence YPRVQKAVGS…MVQAPADAPE (284 aa). An ABC transporter domain is found at 503–742; sequence VQFQDVSFAY…KGCYWAMVQA (240 aa). ATP is bound by residues 538 to 546, 641 to 647, and Q701; these read GPNGSGKST and SQLSGGQ. A Mg(2+)-binding site is contributed by S545.

It belongs to the ABC transporter superfamily. ABCB family. MHC peptide exporter (TC 3.A.1.209) subfamily. Heterodimer of TAP1 and TAP2 (TAP1-TAP2). A component of the peptide loading complex (PLC), interacts via TAPBP with MHCI heterodimer; this interaction mediates peptide-MHCI assembly. Recruits TAPBP in a 1:1 stoichiometry. Interacts with classical MHCI such as HLA-A*02-B2M; this interaction is obligatory for the loading of peptide epitopes. Interacts with non-classical MHCI molecules including HLA-E-B2M and HLA-F-B2M as well as PLC component CALR before the peptide loading. Interacts with PSMB5 and PSMB8. In terms of assembly, (Microbial infection) Interacts with Epstein-Barr virus BNLF2a. As to quaternary structure, (Microbial infection) Interacts with herpes simplex virus US12/ICP47. (Microbial infection) Interacts with adenovirus E3-19K glycoprotein, which binds TAP1-TAP2 and acts as a TAPBP inhibitor, preventing TAP1-TAP2 association with MHCI. It depends on Mg(2+) as a cofactor. Highly expressed in professional APCs monocytes and dendritic cells as well as in lymphocyte subsets T cells, B cells and NK cells.

It localises to the endoplasmic reticulum membrane. The enzyme catalyses a peptide antigen(in) + ATP + H2O = a peptide antigen(out) + ADP + phosphate + H(+). Its activity is regulated as follows. Inhibited at high ER lumenal peptide concentrations. (Microbial infection) Inhibited by herpes simplex virus US12/ICP47 protein, which blocks the peptide-binding site of TAP1-TAP2. With respect to regulation, (Microbial infection) Inhibited by human cytomegalovirus US6 glycoprotein, which binds to the lumenal side of TAP1-TAP2 complex and inhibits peptide translocation by specifically blocking ATP-binding and preventing TAP1-TAP2 conformational rearrangement induced by peptide binding. Functionally, ABC transporter associated with antigen processing. In complex with TAP2 mediates unidirectional translocation of peptide antigens from cytosol to endoplasmic reticulum (ER) for loading onto MHC class I (MHCI) molecules. Uses the chemical energy of ATP to export peptides against the concentration gradient. During the transport cycle alternates between 'inward-facing' state with peptide binding site facing the cytosol to 'outward-facing' state with peptide binding site facing the ER lumen. Peptide antigen binding to ATP-loaded TAP1-TAP2 induces a switch to hydrolysis-competent 'outward-facing' conformation ready for peptide loading onto nascent MHCI molecules. Subsequently ATP hydrolysis resets the transporter to the 'inward facing' state for a new cycle. Typically transports intracellular peptide antigens of 8 to 13 amino acids that arise from cytosolic proteolysis via IFNG-induced immunoproteasome. Binds peptides with free N- and C-termini, the first three and the C-terminal residues being critical. Preferentially selects peptides having a highly hydrophobic residue at position 3 and hydrophobic or charged residues at the C-terminal anchor. Proline at position 2 has the most destabilizing effect. As a component of the peptide loading complex (PLC), acts as a molecular scaffold essential for peptide-MHCI assembly and antigen presentation. This Homo sapiens (Human) protein is Antigen peptide transporter 1.